Reading from the N-terminus, the 420-residue chain is uncharacterized protein (420 aa).

Disordered stretches follow at residues 84-103 (RSQANSESTPPEHTWSGTSE) and 122-211 (SMNN…NKKS). Over residues 85–103 (SQANSESTPPEHTWSGTSE) the composition is skewed to polar residues. The segment covering 184–199 (SMTDQEVEQRRKEANK) has biased composition (basic and acidic residues). Coiled coils occupy residues 265–310 (TEKE…TATN) and 345–374 (LQFKIKKFERREKLLEEVENQIKQYFNFKE). The segment covering 399–408 (KTSSPKTSIA) has biased composition (polar residues). The interval 399 to 420 (KTSSPKTSIAGSHRRSTRSSEN) is disordered. Residues 410–420 (SHRRSTRSSEN) show a composition bias toward basic residues.

This is an uncharacterized protein from Caenorhabditis elegans.